A 179-amino-acid polypeptide reads, in one-letter code: Cytochrome b6-f complex iron-sulfur subunit (179 aa).

A helical membrane pass occupies residues 20-42 (LLTFGTITGVAAGALYPIVKYFI). Positions 60–161 (GNDVIVSQFL…ANVTDNDKVV (102 aa)) constitute a Rieske domain. Positions 107, 109, 125, and 128 each coordinate [2Fe-2S] cluster. Cysteine 112 and cysteine 127 are disulfide-bonded.

It belongs to the Rieske iron-sulfur protein family. As to quaternary structure, the 4 large subunits of the cytochrome b6-f complex are cytochrome b6, subunit IV (17 kDa polypeptide, PetD), cytochrome f and the Rieske protein, while the 4 small subunits are PetG, PetL, PetM and PetN. The complex functions as a dimer. The cofactor is [2Fe-2S] cluster.

It localises to the cellular thylakoid membrane. It carries out the reaction 2 oxidized [plastocyanin] + a plastoquinol + 2 H(+)(in) = 2 reduced [plastocyanin] + a plastoquinone + 4 H(+)(out). Its function is as follows. Component of the cytochrome b6-f complex, which mediates electron transfer between photosystem II (PSII) and photosystem I (PSI), cyclic electron flow around PSI, and state transitions. This is Cytochrome b6-f complex iron-sulfur subunit from Microcystis aeruginosa (strain NIES-843 / IAM M-2473).